A 170-amino-acid chain; its full sequence is Thialysine N-epsilon-acetyltransferase (170 aa).

In terms of domain architecture, N-acetyltransferase spans 4-166 (VMIREAKEGD…FRFEGEAMRE (163 aa)). Residue 27–28 (YE) coordinates substrate. Lys29 bears the N6-acetyllysine mark. Glu92 lines the substrate pocket. Acetyl-CoA is bound by residues 94–96 (IYV), 102–107 (GQGIGS), 133–135 (NKR), and Tyr140. Tyr140 acts as the Proton donor in catalysis. Glu152 is a binding site for substrate.

Belongs to the acetyltransferase family. As to quaternary structure, homodimer.

It is found in the cytoplasm. It carries out the reaction S-(2-aminoethyl)-L-cysteine + acetyl-CoA = S-(2-acetamidoethyl)-L-cysteine + CoA + H(+). It catalyses the reaction an alkane-alpha,omega-diamine + acetyl-CoA = an N-acetylalkane-alpha,omega-diamine + CoA + H(+). Functionally, catalyzes the N-acetylation of the amino acid thialysine (S-(2-aminoethyl)-L-cysteine), a L-lysine analog with the 4-methylene group substituted with a sulfur. May also catalyze acetylation of polyamines, such as norspermidine, spermidine or spermine. However, ability to acetylate polyamines is weak, suggesting that it does not act as a diamine acetyltransferase in vivo. This Bos taurus (Bovine) protein is Thialysine N-epsilon-acetyltransferase.